The primary structure comprises 251 residues: Pyrroloquinoline-quinone synthase (251 aa).

Belongs to the PqqC family.

It catalyses the reaction 6-(2-amino-2-carboxyethyl)-7,8-dioxo-1,2,3,4,7,8-hexahydroquinoline-2,4-dicarboxylate + 3 O2 = pyrroloquinoline quinone + 2 H2O2 + 2 H2O + H(+). Its pathway is cofactor biosynthesis; pyrroloquinoline quinone biosynthesis. Its function is as follows. Ring cyclization and eight-electron oxidation of 3a-(2-amino-2-carboxyethyl)-4,5-dioxo-4,5,6,7,8,9-hexahydroquinoline-7,9-dicarboxylic-acid to PQQ. The protein is Pyrroloquinoline-quinone synthase of Klebsiella pneumoniae (strain 342).